The sequence spans 210 residues: Histone H1A (210 aa).

2 disordered regions span residues 1–49 (MAEA…VSEQ) and 101–210 (KGSG…PKKK). Low complexity-rich tracts occupy residues 26–45 (KKAAAARGAAKSKKPSSGPS) and 129–142 (PLAAEAKKPAAAAK). The 72-residue stretch at 42–113 (SGPSVSEQIV…GASGSFKLNK (72 aa)) folds into the H15 domain. Composition is skewed to basic residues over residues 143–153 (KTAKSPKKPKK) and 160–180 (SPKKLKKPAKAAKSPAKKTAV). Residues 181–192 (KPKVAAKSPAKA) are compositionally biased toward low complexity. Residues 193–210 (KAAKPKVAKAKKAAPKKK) show a composition bias toward basic residues.

This sequence belongs to the histone H1/H5 family.

The protein localises to the nucleus. It is found in the chromosome. Functionally, histones H1 are necessary for the condensation of nucleosome chains into higher-order structures. The chain is Histone H1A from Xenopus laevis (African clawed frog).